The chain runs to 335 residues: Phosphate acyltransferase (335 aa).

Belongs to the PlsX family. Homodimer. Probably interacts with PlsY.

It is found in the cytoplasm. It carries out the reaction a fatty acyl-[ACP] + phosphate = an acyl phosphate + holo-[ACP]. It participates in lipid metabolism; phospholipid metabolism. In terms of biological role, catalyzes the reversible formation of acyl-phosphate (acyl-PO(4)) from acyl-[acyl-carrier-protein] (acyl-ACP). This enzyme utilizes acyl-ACP as fatty acyl donor, but not acyl-CoA. This Streptococcus pyogenes serotype M18 (strain MGAS8232) protein is Phosphate acyltransferase.